Consider the following 262-residue polypeptide: Phosphate import ATP-binding protein PstB 2 (262 aa).

In terms of domain architecture, ABC transporter spans 18 to 257; sequence FVVRNLDLFY…PSDRRTEDYI (240 aa). 50–57 serves as a coordination point for ATP; that stretch reads GPSGCGKS.

This sequence belongs to the ABC transporter superfamily. Phosphate importer (TC 3.A.1.7) family. In terms of assembly, the complex is composed of two ATP-binding proteins (PstB), two transmembrane proteins (PstC and PstA) and a solute-binding protein (PstS).

It is found in the cell membrane. The enzyme catalyses phosphate(out) + ATP + H2O = ADP + 2 phosphate(in) + H(+). Its function is as follows. Part of the ABC transporter complex PstSACB involved in phosphate import. Responsible for energy coupling to the transport system. In Symbiobacterium thermophilum (strain DSM 24528 / JCM 14929 / IAM 14863 / T), this protein is Phosphate import ATP-binding protein PstB 2.